The sequence spans 146 residues: Ferredoxin-thioredoxin reductase catalytic chain, chloroplastic (146 aa).

A chloroplast-targeting transit peptide spans 1-31 (MNLQAVSCSFGFLSSPLGVTPRTSFRRFVIR). A [4Fe-4S] cluster-binding site is contributed by C85. C87 functions as the Nucleophile in the catalytic mechanism. Cysteines 87 and 117 form a disulfide. C104, C106, and C115 together coordinate [4Fe-4S] cluster.

It belongs to the ferredoxin thioredoxin reductase beta subunit family. As to quaternary structure, heterodimer of subunit A (variable subunit) and subunit B (catalytic subunit). Heterodimeric FTR forms a complex with ferredoxin and thioredoxin. [4Fe-4S] cluster is required as a cofactor.

The protein localises to the plastid. It localises to the chloroplast. The enzyme catalyses [thioredoxin]-disulfide + 2 reduced [2Fe-2S]-[ferredoxin] + 2 H(+) = [thioredoxin]-dithiol + 2 oxidized [2Fe-2S]-[ferredoxin]. Its function is as follows. Catalytic subunit of the ferredoxin-thioredoxin reductase (FTR), which catalyzes the two-electron reduction of thioredoxins by the electrons provided by reduced ferredoxin. The polypeptide is Ferredoxin-thioredoxin reductase catalytic chain, chloroplastic (Arabidopsis thaliana (Mouse-ear cress)).